Here is a 530-residue protein sequence, read N- to C-terminus: Chaperone Ric-8A (530 aa).

Ser-435 is subject to Phosphoserine. Phosphothreonine is present on residues Thr-440 and Thr-442. 4 positions are modified to phosphoserine: Ser-501, Ser-522, Ser-523, and Ser-527.

It belongs to the synembryn family. As to quaternary structure, interacts with GDP-bound G alpha proteins GNAI1, GNAO1 and GNAQ, and with GNA13 with lower affinity. Does not interact with G-alpha proteins when they are in complex with subunits beta and gamma. Interacts (via C-terminus) with RGS14; the interaction stimulates the dissociation of the complex between RGS14 and the active GTP-bound form of GNAI1. Interacts with NCS1; interaction is favored in the absence of Ca(2+) and myristoylation of NCS1 is not required. In terms of processing, phosphorylated at Ser-435 and Thr-440 by CK2, stabilizing its interface with G alpha proteins.

It localises to the cytoplasm. The protein resides in the cell cortex. Functionally, chaperone that specifically binds and folds nascent G alpha proteins prior to G protein heterotrimer formation, promoting their stability and activity: folds GNAI1, GNAO1, GNA13 and GNAQ. Does not fold G(s) G-alpha proteins GNAS nor GNAL. Also acts as a guanine nucleotide exchange factor (GEF) for G alpha proteins by stimulating exchange of bound GDP for free GTP. Involved in regulation of microtubule pulling forces during mitotic movement of chromosomes by stimulating G(i)-alpha protein (GNAI1), possibly leading to release G(i)-alpha-GTP and NuMA proteins from the NuMA-GPSM2-G(i)-alpha-GDP complex. Also acts as an activator for G(q)-alpha (GNAQ) protein by enhancing the G(q)-coupled receptor-mediated ERK activation. This chain is Chaperone Ric-8A (RIC8A), found in Bos taurus (Bovine).